We begin with the raw amino-acid sequence, 524 residues long: Homeobox protein engrailed-like SMOX-2 (524 aa).

Residues 194 to 218 form a disordered region; that stretch reads SSSSSSSSSSSSSSSSSSCSTNSSS. A DNA-binding region (homeobox) is located at residues 423–482; the sequence is LKRPRTSFTVPQLKRLSQEFEKNRYLDELRRKKLATELDLRESQVKIWFQNKRAKTKKAS.

Belongs to the engrailed homeobox family.

It is found in the nucleus. In Schistosoma mansoni (Blood fluke), this protein is Homeobox protein engrailed-like SMOX-2 (SMOX-2).